Here is a 264-residue protein sequence, read N- to C-terminus: Thymidylate synthase (264 aa).

Residue arginine 21 participates in dUMP binding. Histidine 51 is a (6R)-5,10-methylene-5,6,7,8-tetrahydrofolate binding site. 126–127 (RR) serves as a coordination point for dUMP. Cysteine 146 serves as the catalytic Nucleophile. DUMP-binding positions include 166–169 (RSCD), asparagine 177, and 207–209 (HLY). Residue aspartate 169 participates in (6R)-5,10-methylene-5,6,7,8-tetrahydrofolate binding. Serine 263 serves as a coordination point for (6R)-5,10-methylene-5,6,7,8-tetrahydrofolate.

It belongs to the thymidylate synthase family. Bacterial-type ThyA subfamily. In terms of assembly, homodimer.

The protein localises to the cytoplasm. It carries out the reaction dUMP + (6R)-5,10-methylene-5,6,7,8-tetrahydrofolate = 7,8-dihydrofolate + dTMP. It participates in pyrimidine metabolism; dTTP biosynthesis. Its function is as follows. Catalyzes the reductive methylation of 2'-deoxyuridine-5'-monophosphate (dUMP) to 2'-deoxythymidine-5'-monophosphate (dTMP) while utilizing 5,10-methylenetetrahydrofolate (mTHF) as the methyl donor and reductant in the reaction, yielding dihydrofolate (DHF) as a by-product. This enzymatic reaction provides an intracellular de novo source of dTMP, an essential precursor for DNA biosynthesis. This Wigglesworthia glossinidia brevipalpis protein is Thymidylate synthase.